Reading from the N-terminus, the 135-residue chain is Large ribosomal subunit protein eL27 (135 aa).

It belongs to the eukaryotic ribosomal protein eL27 family.

The chain is Large ribosomal subunit protein eL27 (RPL27) from Pisum sativum (Garden pea).